The primary structure comprises 70 residues: uncharacterized protein (70 aa).

A disordered region spans residues 40–70 (LHQQRTAHKVTSPPSQRPQNSETKSDSQNRS). Over residues 51–61 (SPPSQRPQNSE) the composition is skewed to polar residues.

This is an uncharacterized protein from Bdellovibrio phage phiMH2K (Bacteriophage phiMH2K).